The following is a 521-amino-acid chain: 56 kDa type-specific antigen (521 aa).

The first 22 residues, 1–22 (MRKIMLIASAMSALSLPFSANA), serve as a signal peptide directing secretion. A helical transmembrane segment spans residues 64–86 (LPLIKGMPFGVTLAAGMTITPGV). Positions 386–415 (LGVDQGQEGGCSKDKKQSDTTAEESKKEGK) are disordered. Residues 396–415 (CSKDKKQSDTTAEESKKEGK) show a composition bias toward basic and acidic residues. A helical membrane pass occupies residues 469–484 (TGMVGSLALGVAANVA).

It is found in the cell membrane. Its function is as follows. May be an adherent factor for rickettsial adsorption to the host-cell surface and a determinant of virulence of individual rickettsial strain. It is the major outer membrane protein. The sequence is that of 56 kDa type-specific antigen from Orientia tsutsugamushi (Rickettsia tsutsugamushi).